Consider the following 461-residue polypeptide: Argininosuccinate lyase (461 aa).

Belongs to the lyase 1 family. Argininosuccinate lyase subfamily.

The protein localises to the cytoplasm. The catalysed reaction is 2-(N(omega)-L-arginino)succinate = fumarate + L-arginine. It participates in amino-acid biosynthesis; L-arginine biosynthesis; L-arginine from L-ornithine and carbamoyl phosphate: step 3/3. Strongly inhibited by L-arginine. Inhibitory effects are lowered at pH 7.0 compared to those at pH 8.0. At 42 degrees Celsius and pH 8.0, activity decreases to 77% and 25% in the presence of 1 mM and 10 mM arginine, respectively. The other amino and organic acids do not affect activity. Its function is as follows. Catalyzes the last step of arginine biosynthesis, the conversion of argininosuccinate into L-arginine and fumarate. This Nostoc sp. (strain PCC 7120 / SAG 25.82 / UTEX 2576) protein is Argininosuccinate lyase.